Consider the following 308-residue polypeptide: Transaldolase (308 aa).

The Schiff-base intermediate with substrate role is filled by Lys-125.

The protein belongs to the transaldolase family. Type 1 subfamily. As to quaternary structure, homodimer.

The protein resides in the cytoplasm. The enzyme catalyses D-sedoheptulose 7-phosphate + D-glyceraldehyde 3-phosphate = D-erythrose 4-phosphate + beta-D-fructose 6-phosphate. It participates in carbohydrate degradation; pentose phosphate pathway; D-glyceraldehyde 3-phosphate and beta-D-fructose 6-phosphate from D-ribose 5-phosphate and D-xylulose 5-phosphate (non-oxidative stage): step 2/3. In terms of biological role, transaldolase is important for the balance of metabolites in the pentose-phosphate pathway. This is Transaldolase from Pseudomonas putida (strain W619).